A 471-amino-acid chain; its full sequence is Nuclear distribution protein PAC1 (471 aa).

In terms of domain architecture, LisH spans 9-41 (QAEELHKSMIAYLLSVNLSKSAAALREELADSV). Residues 60 to 87 (TSVVRLQKKIMDLESRNAALQQELDSAT) are a coiled coil. Polar residues predominate over residues 83–93 (LDSATPTSLSR). Residues 83–108 (LDSATPTSLSRRNQDPASWLPRAPAR) are disordered. WD repeat units lie at residues 113–154 (SHRG…RTIK), 156–196 (HTRA…KNIR), 200–247 (GHDH…CVKT), 250–289 (GHLDWVRDVFPSPDGRFLMSGGDDRVPRLLDASSGETKST), 292–352 (GHEH…IKTL), 354–393 (GHDNWIRALVFHPGGKYLLSVSDDKTLRCWDLSQECKCVR), 398–428 (AHGHFVSCIRWAPNIINESGLVSGEGGINGQ), and 429–467 (GTPSMNGVSISTTSKKEDTGGGGKIRCVIATGSVDMNVR). The segment at 424–449 (GINGQGTPSMNGVSISTTSKKEDTGG) is disordered. Residues 428-441 (QGTPSMNGVSISTT) show a composition bias toward polar residues.

The protein belongs to the WD repeat LIS1/nudF family. As to quaternary structure, self-associates. Interacts with NDL1 and dynein.

Its subcellular location is the cytoplasm. The protein localises to the cytoskeleton. It localises to the spindle pole. In terms of biological role, positively regulates the activity of the minus-end directed microtubule motor protein dynein. May enhance dynein-mediated microtubule sliding by targeting dynein to the microtubule plus end. Required for nuclear migration during vegetative growth as well as development. Required for retrograde early endosome (EE) transport from the hyphal tip. Required for localization of dynein to the mitotic spindle poles. Recruits additional proteins to the dynein complex at SPBs. This Coccidioides posadasii (strain C735) (Valley fever fungus) protein is Nuclear distribution protein PAC1.